A 798-amino-acid chain; its full sequence is ATP-dependent RNA helicase DBP4 (798 aa).

Residues 1–30 (MAHKGKAAPAKPPTSHKKEVKSLKRKRGQE) form a disordered region. The span at 16–30 (HKKEVKSLKRKRGQE) shows a compositional bias: basic and acidic residues. Residues 49 to 77 (KAFAELPLSEPTAKGVRDSHFETLTDIQA) carry the Q motif motif. Residues 80 to 254 (IPLALKGRDI…RLSLKDPEYV (175 aa)) enclose the Helicase ATP-binding domain. An ATP-binding site is contributed by 93–100 (AKTGSGKT). A DEAD box motif is present at residues 202-205 (DEAD). The Helicase C-terminal domain maps to 280–435 (KLDTLWGFIK…SKKKSIRDEL (156 aa)). Disordered regions lie at residues 503–544 (QKGE…RTKA) and 653–781 (QDED…LDHE). Composition is skewed to basic and acidic residues over residues 529 to 544 (DDKP…RTKA) and 666 to 689 (ALRK…DKAL). A compositionally biased stretch (basic residues) spans 690-704 (AKQKKREKKLKRKAR). Positions 767–781 (DERKPKSKVIELDHE) are enriched in basic and acidic residues.

The protein belongs to the DEAD box helicase family. DDX10/DBP4 subfamily. Interacts with the U3 and U14 snoRNAs. Associates with pre-ribosomal complexes.

It is found in the nucleus. Its subcellular location is the nucleolus. The enzyme catalyses ATP + H2O = ADP + phosphate + H(+). Functionally, ATP-dependent RNA helicase required for ribosome biogenesis. Involved in the release of U14 snoRNA in pre-ribosomal complexes. Required for pre-rRNA cleavage at site A2. The protein is ATP-dependent RNA helicase DBP4 (DBP4) of Pyricularia oryzae (strain 70-15 / ATCC MYA-4617 / FGSC 8958) (Rice blast fungus).